Here is a 388-residue protein sequence, read N- to C-terminus: MTIQVLVVDDSSFFRRRVSEIVNQDPELEVIGVAVNGKEAVKMAAELKPHVITMDIEMPVMDGITAVREIMANNPIPILMFSSLTHDGAKATLDALDAGALDFLPKRFEDIATNKDEAIRLLQQRIRELGRRRIYKPLSRAGATAVPASARAGLSSTSPTLGSSTLGRSPASGLASSASRNSPTVSTPASAIRASGKQYKALLIGTSTGGPVALQKILTQFPASYPHPILLIQHMPAAFTPAFATRLNGLCQIEVKEAENGDQLKAGCAYLAPGGMQMMVERTGSISRLKVLAGSSDMNYKPSVDITFASASKAFNADVLAVVLTGMGADGREGARMLKTSGSTIWAQDEASCVVYGMPQAVAVAGLSTHSISLDQMAEAILKESGRG.

The Response regulatory domain maps to 4–121 (QVLVVDDSSF…ATNKDEAIRL (118 aa)). Asp-55 is modified (4-aspartylphosphate). The disordered stretch occupies residues 149–190 (SARAGLSSTSPTLGSSTLGRSPASGLASSASRNSPTVSTPAS). Over residues 153-169 (GLSSTSPTLGSSTLGRS) the composition is skewed to low complexity. Over residues 174–189 (LASSASRNSPTVSTPA) the composition is skewed to polar residues. The CheB-type methylesterase domain occupies 188–388 (PASAIRASGK…EAILKESGRG (201 aa)). Residues Ser-207, His-234, and Asp-330 contribute to the active site.

The protein belongs to the CheB family. Post-translationally, phosphorylated by CheA. Phosphorylation of the N-terminal regulatory domain activates the methylesterase activity.

The protein localises to the cytoplasm. It carries out the reaction [protein]-L-glutamate 5-O-methyl ester + H2O = L-glutamyl-[protein] + methanol + H(+). It catalyses the reaction L-glutaminyl-[protein] + H2O = L-glutamyl-[protein] + NH4(+). Its function is as follows. Involved in chemotaxis. Part of a chemotaxis signal transduction system that modulates chemotaxis in response to various stimuli. Catalyzes the demethylation of specific methylglutamate residues introduced into the chemoreceptors (methyl-accepting chemotaxis proteins or MCP) by CheR. Also mediates the irreversible deamidation of specific glutamine residues to glutamic acid. The polypeptide is Protein-glutamate methylesterase/protein-glutamine glutaminase 1 (Shewanella denitrificans (strain OS217 / ATCC BAA-1090 / DSM 15013)).